The sequence spans 570 residues: MKASQFFISTLKEAPAEAAFASHKLMIRAGLIKANASGLYTWMPMGLRVLRKVENVVREEMARAGSVELLMPVVQPAELWQESGRWEFYGKELLRLKDRHERDFCMGPTCEEVIADIVRKEINSYKQLPKNFYHIQTKFRDEVRPRFGVMRAREFVMKDAYSFHADYASLQATYDAMYDAHCRIFTRLGLAFRPVAADTGSIGGTGSHEFQVLAESGEDVIAYSDTSDYAANIELAPTLPLKGERAAAQAVLTKVHTPNVKTIESLVEFLNIPVEQTLKSIVVEGENEGELVLLLLRGDHEFNDIKAEKLAGVKSPLTMASPAAIVEQFGANGGSLGPVGFTGKVYADFATEKGADWVIGANEDDYHYTGFNFGRDAAEPEFVDLRNVVEGDESPDGQGRLKLARGIEVGHVFQLRGKYTQAMNVSFLDNNGKSQIMEMGCYGIGITRVVAAAIEQNNDEKGIIWTKAMAPFEVVIVPMNYKKSDTVREAADRIYAELLAAGADVLLDDRDERAGVLLNDSELLGIPHRIVIGDRALKEGNVEYAERRGNEAQAVAIGEIVARVTASLNA.

This sequence belongs to the class-II aminoacyl-tRNA synthetase family. ProS type 1 subfamily. In terms of assembly, homodimer.

Its subcellular location is the cytoplasm. It carries out the reaction tRNA(Pro) + L-proline + ATP = L-prolyl-tRNA(Pro) + AMP + diphosphate. Its function is as follows. Catalyzes the attachment of proline to tRNA(Pro) in a two-step reaction: proline is first activated by ATP to form Pro-AMP and then transferred to the acceptor end of tRNA(Pro). As ProRS can inadvertently accommodate and process non-cognate amino acids such as alanine and cysteine, to avoid such errors it has two additional distinct editing activities against alanine. One activity is designated as 'pretransfer' editing and involves the tRNA(Pro)-independent hydrolysis of activated Ala-AMP. The other activity is designated 'posttransfer' editing and involves deacylation of mischarged Ala-tRNA(Pro). The misacylated Cys-tRNA(Pro) is not edited by ProRS. This chain is Proline--tRNA ligase, found in Neisseria gonorrhoeae (strain ATCC 700825 / FA 1090).